The following is a 271-amino-acid chain: Glutamate racemase (271 aa).

Residues 12 to 13 and 44 to 45 each bind substrate; these read DS and YG. Cysteine 75 acts as the Proton donor/acceptor in catalysis. Residue 76–77 coordinates substrate; the sequence is NS. The active-site Proton donor/acceptor is the cysteine 185. 186–187 lines the substrate pocket; that stretch reads TH.

The protein belongs to the aspartate/glutamate racemases family.

The catalysed reaction is L-glutamate = D-glutamate. It functions in the pathway cell wall biogenesis; peptidoglycan biosynthesis. Provides the (R)-glutamate required for cell wall biosynthesis. The chain is Glutamate racemase from Mycobacterium bovis (strain BCG / Pasteur 1173P2).